The sequence spans 401 residues: Multidrug resistance protein MdtH (401 aa).

11 consecutive transmembrane segments (helical) span residues 13 to 33 (YFLI…FPLI), 34 to 54 (SIHF…ALGL), 88 to 108 (IGFI…ACIL), 139 to 159 (ILML…SWLL), 164 to 184 (FQLV…FNAW), 211 to 231 (FIIY…VMLM), 248 to 268 (YIYI…TYWM), 275 to 295 (ETRL…IGSV), 298 to 318 (LYEL…AEPA), 341 to 361 (LSLA…YDLG), and 366 to 386 (FYQL…LILY).

It belongs to the major facilitator superfamily. DHA1 family. MdtH (TC 2.A.1.2.21) subfamily.

The protein resides in the cell inner membrane. This Blochmanniella floridana protein is Multidrug resistance protein MdtH.